A 103-amino-acid polypeptide reads, in one-letter code: Large ribosomal subunit protein bL21 (103 aa).

The protein belongs to the bacterial ribosomal protein bL21 family. As to quaternary structure, part of the 50S ribosomal subunit. Contacts protein L20.

Functionally, this protein binds to 23S rRNA in the presence of protein L20. The sequence is that of Large ribosomal subunit protein bL21 from Thermobifida fusca (strain YX).